The sequence spans 223 residues: Ribonuclease 3 (223 aa).

The 124-residue stretch at leucine 4 to glycine 127 folds into the RNase III domain. Residue glutamate 40 coordinates Mg(2+). The active site involves aspartate 44. Mg(2+)-binding residues include aspartate 113 and glutamate 116. The active site involves glutamate 116. The region spanning aspartate 154–lysine 223 is the DRBM domain.

The protein belongs to the ribonuclease III family. In terms of assembly, homodimer. The cofactor is Mg(2+).

It localises to the cytoplasm. The enzyme catalyses Endonucleolytic cleavage to 5'-phosphomonoester.. Digests double-stranded RNA. Involved in the processing of primary rRNA transcript to yield the immediate precursors to the large and small rRNAs (23S and 16S). Processes some mRNAs, and tRNAs when they are encoded in the rRNA operon. Processes pre-crRNA and tracrRNA of type II CRISPR loci if present in the organism. The polypeptide is Ribonuclease 3 (Campylobacter curvus (strain 525.92)).